We begin with the raw amino-acid sequence, 115 residues long: Large ribosomal subunit protein bL20 (115 aa).

It belongs to the bacterial ribosomal protein bL20 family.

Its function is as follows. Binds directly to 23S ribosomal RNA and is necessary for the in vitro assembly process of the 50S ribosomal subunit. It is not involved in the protein synthesizing functions of that subunit. This is Large ribosomal subunit protein bL20 from Synechococcus sp. (strain RCC307).